A 585-amino-acid chain; its full sequence is Trehalase (585 aa).

The first 32 residues, 1 to 32 (MAKTTPMAKPSVGLLTLQVLVFCALTGSLASA), serve as a signal peptide directing secretion. Substrate-binding positions include arginine 184 and 191–192 (WD). N-linked (GlcNAc...) asparagine glycosylation occurs at asparagine 207. Substrate is bound by residues asparagine 228, 237–239 (RSQ), 302–304 (RPE), and glycine 336. Aspartate 338 acts as the Proton donor/acceptor in catalysis. N-linked (GlcNAc...) asparagine glycosylation occurs at asparagine 348. Glutamate 535 acts as the Proton donor/acceptor in catalysis. Glutamate 550 contributes to the substrate binding site.

It belongs to the glycosyl hydrolase 37 family. In terms of tissue distribution, expressed by the venom gland.

The protein resides in the secreted. It catalyses the reaction alpha,alpha-trehalose + H2O = alpha-D-glucose + beta-D-glucose. This is Trehalase (tre1) from Pimpla hypochondriaca (Parasitoid wasp).